A 223-amino-acid polypeptide reads, in one-letter code: Ribonuclease 3 (223 aa).

In terms of domain architecture, RNase III spans 3–125 (LERLQKKLSY…IIAAIYLDAG (123 aa)). Glutamate 38 serves as a coordination point for Mg(2+). Residue aspartate 42 is part of the active site. 2 residues coordinate Mg(2+): aspartate 111 and glutamate 114. Residue glutamate 114 is part of the active site. The 71-residue stretch at 152–222 (DPKTRLQEFL…AEQVLAKLTT (71 aa)) folds into the DRBM domain.

The protein belongs to the ribonuclease III family. In terms of assembly, homodimer. Mg(2+) is required as a cofactor.

The protein localises to the cytoplasm. The enzyme catalyses Endonucleolytic cleavage to 5'-phosphomonoester.. In terms of biological role, digests double-stranded RNA. Involved in the processing of primary rRNA transcript to yield the immediate precursors to the large and small rRNAs (23S and 16S). Processes some mRNAs, and tRNAs when they are encoded in the rRNA operon. Processes pre-crRNA and tracrRNA of type II CRISPR loci if present in the organism. In Actinobacillus pleuropneumoniae serotype 5b (strain L20), this protein is Ribonuclease 3.